We begin with the raw amino-acid sequence, 691 residues long: Elongation factor G (691 aa).

Residues 8–282 form the tr-type G domain; that stretch reads ERVRNIGIAA…AVVDYLPAPI (275 aa). GTP contacts are provided by residues 17–24, 81–85, and 135–138; these read AHIDAGKT, DTPGH, and NKMD.

The protein belongs to the TRAFAC class translation factor GTPase superfamily. Classic translation factor GTPase family. EF-G/EF-2 subfamily.

The protein resides in the cytoplasm. Functionally, catalyzes the GTP-dependent ribosomal translocation step during translation elongation. During this step, the ribosome changes from the pre-translocational (PRE) to the post-translocational (POST) state as the newly formed A-site-bound peptidyl-tRNA and P-site-bound deacylated tRNA move to the P and E sites, respectively. Catalyzes the coordinated movement of the two tRNA molecules, the mRNA and conformational changes in the ribosome. This is Elongation factor G from Thermosynechococcus vestitus (strain NIES-2133 / IAM M-273 / BP-1).